We begin with the raw amino-acid sequence, 203 residues long: GTP cyclohydrolase-2 (203 aa).

GTP is bound at residue 49-53 (RIHSE). Zn(2+) is bound by residues cysteine 54, cysteine 65, and cysteine 67. GTP contacts are provided by residues glutamine 70, 92 to 94 (EGR), and threonine 114. Aspartate 126 acts as the Proton acceptor in catalysis. The active-site Nucleophile is arginine 128. GTP is bound by residues threonine 149 and lysine 154.

It belongs to the GTP cyclohydrolase II family. It depends on Zn(2+) as a cofactor.

The enzyme catalyses GTP + 4 H2O = 2,5-diamino-6-hydroxy-4-(5-phosphoribosylamino)-pyrimidine + formate + 2 phosphate + 3 H(+). Its pathway is cofactor biosynthesis; riboflavin biosynthesis; 5-amino-6-(D-ribitylamino)uracil from GTP: step 1/4. In terms of biological role, catalyzes the conversion of GTP to 2,5-diamino-6-ribosylamino-4(3H)-pyrimidinone 5'-phosphate (DARP), formate and pyrophosphate. This is GTP cyclohydrolase-2 from Shewanella sp. (strain MR-4).